The chain runs to 237 residues: Transcriptional regulatory protein YvrH (237 aa).

The 115-residue stretch at 5–119 (SILIVDDEKA…ELAARIRAHL (115 aa)) folds into the Response regulatory domain. 4-aspartylphosphate is present on Asp55. Residues 131–230 (NQTYTYDYFT…VRGLGYRFIP (100 aa)) constitute a DNA-binding region (ompR/PhoB-type).

In terms of processing, phosphorylated by YvrG.

The protein resides in the cytoplasm. Its function is as follows. Member of the two-component regulatory system YvrG/YvrH that positively regulates 7 transcriptional units (wprA, wapA-yxxG, dltABCDE, sunA, sunT-bdbA-yolJ-bdbB, sigO-rsoA, and sigX-rsiX), and negatively regulates the lytABC operon. The chain is Transcriptional regulatory protein YvrH (yvrH) from Bacillus subtilis (strain 168).